Reading from the N-terminus, the 431-residue chain is Adenylosuccinate synthetase (431 aa).

Residues 13-19 and 41-43 each bind GTP; these read GDEGKGK and GHT. Asp-14 serves as the catalytic Proton acceptor. Positions 14 and 41 each coordinate Mg(2+). IMP is bound by residues 14 to 17, 39 to 42, Thr-130, Arg-144, Gln-225, Thr-240, and Arg-304; these read DEGK and NAGH. Residue His-42 is the Proton donor of the active site. 300–306 provides a ligand contact to substrate; the sequence is SVTGRPR. Residues Arg-306, 332–334, and 414–416 each bind GTP; these read KLD and STG.

The protein belongs to the adenylosuccinate synthetase family. Homodimer. Mg(2+) serves as cofactor.

The protein resides in the cytoplasm. It catalyses the reaction IMP + L-aspartate + GTP = N(6)-(1,2-dicarboxyethyl)-AMP + GDP + phosphate + 2 H(+). It functions in the pathway purine metabolism; AMP biosynthesis via de novo pathway; AMP from IMP: step 1/2. Its function is as follows. Plays an important role in the de novo pathway of purine nucleotide biosynthesis. Catalyzes the first committed step in the biosynthesis of AMP from IMP. In Bordetella avium (strain 197N), this protein is Adenylosuccinate synthetase.